A 1036-amino-acid chain; its full sequence is Hexagonally packed intermediate-layer surface protein (1036 aa).

The first 17 residues, 1–17 (MKKNIALMALTGVLTLA), serve as a signal peptide directing secretion. 3 cysteine pairs are disulfide-bonded: Cys74–Cys86, Cys256–Cys275, and Cys642–Cys754.

In terms of processing, glycosylated; contains six glycans. Acylated in the N-terminal region. Post-translationally, the N-terminus is blocked.

It localises to the secreted. The protein localises to the cell wall. It is found in the S-layer. Its function is as follows. Shape maintenance, possible protection from noxious enzymes or exogenous and unsettling DNA, and may mediate homotypic cell-cell contacts. This chain is Hexagonally packed intermediate-layer surface protein (hpi), found in Deinococcus radiodurans.